Here is a 227-residue protein sequence, read N- to C-terminus: A-type potassium channel modulatory protein KCNIP1 (227 aa).

Positions 38-94 constitute an EF-hand 1; degenerate domain; it reads LEMTMVCHRPEGLEQLEAQTNFTKRELQVLYRGFKNECPSGVVNEETFKQIYAQFFP. EF-hand domains lie at 97–132, 133–168, and 181–216; these read DAST…LLRG, TVHE…IYDM, and TPRQ…DDNI. 9 residues coordinate Ca(2+): aspartate 146, asparagine 148, aspartate 150, tyrosine 152, glutamate 157, aspartate 194, asparagine 196, aspartate 198, and glutamate 205. The interaction with KCND2 stretch occupies residues 214 to 227; sequence DNIMRSLQLFQNVM.

The protein belongs to the recoverin family. As to quaternary structure, component of heteromultimeric potassium channels. Identified in potassium channel complexes containing KCND1, KCND2, KCND3, KCNIP1, KCNIP2, KCNIP3, KCNIP4, DPP6 and DPP10. Part of a heterooctamer composed of the tetrameric channel and four KCNIP1 chains. Probably part of a complex consisting of KCNIP1, KCNIP2 isoform 3 and KCND2. Self-associates to form homodimers and homotetramers. Interacts with KCNIP2 isoform 3 in a calcium-dependent manner. Interacts with KCND2; this interaction mediates the capture of both the N- and C-terminus of KCND2, thus preventing KCND2 N-type inactivation and modulates the channel gating kinetics. Interacts with KCND3; each KCNIP1 monomer interacts with two adjacent KCND3 subunits, through both the N-terminal inactivation ball of a KCND3 subunit and a C-terminal helix from the adjacent KCND3 subunit, clamping them together; this interaction stabilizes the tetrameric form and modulates the channel gating kinetics namely channel activation and inactivation kinetics and rate of recovery from inactivation. As to expression, expressed in brain. Found in a subpopulation of neurons widely distributed and enriched in Purkinje cells of the cerebellum and in the reticular thalamic and medial habenular nuclei.

The protein localises to the cell membrane. It localises to the cytoplasm. Its subcellular location is the cell projection. It is found in the dendrite. Regulatory subunit of Kv4/D (Shal)-type voltage-gated rapidly inactivating A-type potassium channels. Regulates channel density, inactivation kinetics and rate of recovery from inactivation in a calcium-dependent and isoform-specific manner. Modulates KCND2/Kv4.2 currents. In vitro, modulates KCND1/Kv4.1 currents. Increases the presence of KCND2 at the cell surface. The protein is A-type potassium channel modulatory protein KCNIP1 of Mus musculus (Mouse).